Reading from the N-terminus, the 1536-residue chain is Glycogen debranching enzyme (1536 aa).

Residues D535, H538, and D670 contribute to the active site.

It belongs to the glycogen debranching enzyme family. Interacts with IGD1.

Its subcellular location is the mitochondrion. It localises to the cytoplasm. It catalyses the reaction Transfers a segment of a (1-&gt;4)-alpha-D-glucan to a new position in an acceptor, which may be glucose or a (1-&gt;4)-alpha-D-glucan.. The catalysed reaction is Hydrolysis of (1-&gt;6)-alpha-D-glucosidic branch linkages in glycogen phosphorylase limit dextrin.. Activity is inhibited by IGD1. Its function is as follows. Multifunctional enzyme acting as 1,4-alpha-D-glucan:1,4-alpha-D-glucan 4-alpha-D-glycosyltransferase and amylo-1,6-glucosidase in glycogen degradation. This is Glycogen debranching enzyme (GDB1) from Saccharomyces cerevisiae (strain ATCC 204508 / S288c) (Baker's yeast).